A 389-amino-acid chain; its full sequence is MADTQTKLSKTFSNFFASEKTSGILLILCTILSLSIANSLAGPAYQGFWHAIVAGLSIEHWVNDALMAVFFLFVGLELERELYNGELSNFRNALLPIFAAIGGIGVPALIHYTLNVGTPTQAGTGIPMATDIAFALGVLALLGSRVPASLKVFLTALAVMDDLGAIIVIAMFYTQQFSLVYLLSALAVFGLLLVLNRIFRVMSLLPYLLGGALMWFLMLKSGVHATIAGVLLAFAIPFSAKADDEKSPSHRLEHFLHKPVAFIILPIFALANTGIVIGSEWQHELLTPNSLGIIGGLVFGKPLGIALLSFVTVAIGVCRLPDDLKWTHIVGAGILGGIGFTMSIFITNLAFTNNASIINASKMAILMASVAAGGLGFLWLSFFQQNDNQ.

The next 11 helical transmembrane spans lie at 24 to 44, 56 to 76, 94 to 114, 122 to 142, 152 to 172, 176 to 196, 216 to 236, 259 to 279, 291 to 311, 326 to 346, and 363 to 383; these read ILLI…AGPA, LSIE…FVGL, LLPI…HYTL, AGTG…LALL, VFLT…IAMF, QFSL…LVLN, FLML…AFAI, PVAF…VIGS, LGII…LSFV, WTHI…SIFI, and MAIL…LSFF.

It belongs to the NhaA Na(+)/H(+) (TC 2.A.33) antiporter family.

The protein resides in the cell inner membrane. It carries out the reaction Na(+)(in) + 2 H(+)(out) = Na(+)(out) + 2 H(+)(in). Na(+)/H(+) antiporter that extrudes sodium in exchange for external protons. The protein is Na(+)/H(+) antiporter NhaA of Dechloromonas aromatica (strain RCB).